We begin with the raw amino-acid sequence, 452 residues long: MSTPRRYHITTFGCQMNKADSERMAGILEDLGYIWSEEANDADLVLYNTCTIRDNAEQKVYSYLGRQAERKRQQPDLTLIVAGCVAQQEGESLLRRVPELDLVMGPQHANRLADLLAQVEAGSQVVATEEVEIAEDITQPRRDSTITAWVNVIYGCNERCTYCVVPNVRGREQSREPAAIRAEIEQLAAQGYREITLLGQNIDAYGRDLPGSTPEGRHLHTLTDLLYTIHDVPGIERIRFATSHPRYFTERLIRACAELPKVCEYFHIPFQSGDNDVLKAMARGYTVERYLRIVEQIRDIIPDAAISADAIVAFPGETEEQFENTLKLVEQVGFDLVNTAAYSPRPGTPAANAPNQLSEEVKQDRLQRLNHLVAQMAADRSQRYLGRTEEVLIEATNPRNPQQVMGRTRTNRLVFCDGTIAQLEGQLVPVRITETRAFSLTGQILSPVAAGC.

The 117-residue stretch at 5–121 (RRYHITTFGC…LADLLAQVEA (117 aa)) folds into the MTTase N-terminal domain. Residues Cys-14, Cys-50, Cys-84, Cys-156, Cys-160, and Cys-163 each coordinate [4Fe-4S] cluster. One can recognise a Radical SAM core domain in the interval 142 to 379 (RDSTITAWVN…NHLVAQMAAD (238 aa)). One can recognise a TRAM domain in the interval 382 to 446 (QRYLGRTEEV…AFSLTGQILS (65 aa)).

Belongs to the methylthiotransferase family. MiaB subfamily. Monomer. The cofactor is [4Fe-4S] cluster.

Its subcellular location is the cytoplasm. The enzyme catalyses N(6)-dimethylallyladenosine(37) in tRNA + (sulfur carrier)-SH + AH2 + 2 S-adenosyl-L-methionine = 2-methylsulfanyl-N(6)-dimethylallyladenosine(37) in tRNA + (sulfur carrier)-H + 5'-deoxyadenosine + L-methionine + A + S-adenosyl-L-homocysteine + 2 H(+). In terms of biological role, catalyzes the methylthiolation of N6-(dimethylallyl)adenosine (i(6)A), leading to the formation of 2-methylthio-N6-(dimethylallyl)adenosine (ms(2)i(6)A) at position 37 in tRNAs that read codons beginning with uridine. The sequence is that of tRNA-2-methylthio-N(6)-dimethylallyladenosine synthase from Synechococcus elongatus (strain ATCC 33912 / PCC 7942 / FACHB-805) (Anacystis nidulans R2).